A 201-amino-acid chain; its full sequence is Large ribosomal subunit protein uL4 (201 aa).

A disordered region spans residues 51–73 (EVTGSGKKPWRQKGTGRARAGSV).

It belongs to the universal ribosomal protein uL4 family. In terms of assembly, part of the 50S ribosomal subunit.

Its function is as follows. One of the primary rRNA binding proteins, this protein initially binds near the 5'-end of the 23S rRNA. It is important during the early stages of 50S assembly. It makes multiple contacts with different domains of the 23S rRNA in the assembled 50S subunit and ribosome. Forms part of the polypeptide exit tunnel. The polypeptide is Large ribosomal subunit protein uL4 (Erwinia tasmaniensis (strain DSM 17950 / CFBP 7177 / CIP 109463 / NCPPB 4357 / Et1/99)).